The following is a 360-amino-acid chain: Peptide chain release factor 1 (360 aa).

An N5-methylglutamine modification is found at Gln234.

It belongs to the prokaryotic/mitochondrial release factor family. In terms of processing, methylated by PrmC. Methylation increases the termination efficiency of RF1.

The protein resides in the cytoplasm. Peptide chain release factor 1 directs the termination of translation in response to the peptide chain termination codons UAG and UAA. This chain is Peptide chain release factor 1, found in Clostridium botulinum (strain Alaska E43 / Type E3).